A 428-amino-acid polypeptide reads, in one-letter code: Serine--tRNA ligase (428 aa).

237 to 239 (TAE) is an L-serine binding site. An ATP-binding site is contributed by 268–270 (RSE). Glu-291 is a binding site for L-serine. An ATP-binding site is contributed by 355–358 (EISS). An L-serine-binding site is contributed by Ser-390.

It belongs to the class-II aminoacyl-tRNA synthetase family. Type-1 seryl-tRNA synthetase subfamily. Homodimer. The tRNA molecule binds across the dimer.

It is found in the cytoplasm. The catalysed reaction is tRNA(Ser) + L-serine + ATP = L-seryl-tRNA(Ser) + AMP + diphosphate + H(+). It catalyses the reaction tRNA(Sec) + L-serine + ATP = L-seryl-tRNA(Sec) + AMP + diphosphate + H(+). It participates in aminoacyl-tRNA biosynthesis; selenocysteinyl-tRNA(Sec) biosynthesis; L-seryl-tRNA(Sec) from L-serine and tRNA(Sec): step 1/1. Catalyzes the attachment of serine to tRNA(Ser). Is also able to aminoacylate tRNA(Sec) with serine, to form the misacylated tRNA L-seryl-tRNA(Sec), which will be further converted into selenocysteinyl-tRNA(Sec). The sequence is that of Serine--tRNA ligase from Hydrogenovibrio crunogenus (strain DSM 25203 / XCL-2) (Thiomicrospira crunogena).